Reading from the N-terminus, the 280-residue chain is Shikimate kinase (280 aa).

P86–A96 contributes to the ATP binding site.

Belongs to the GHMP kinase family. Archaeal shikimate kinase subfamily.

Its subcellular location is the cytoplasm. The enzyme catalyses shikimate + ATP = 3-phosphoshikimate + ADP + H(+). The protein operates within metabolic intermediate biosynthesis; chorismate biosynthesis; chorismate from D-erythrose 4-phosphate and phosphoenolpyruvate: step 5/7. This chain is Shikimate kinase (aroK), found in Aeropyrum pernix (strain ATCC 700893 / DSM 11879 / JCM 9820 / NBRC 100138 / K1).